Here is a 349-residue protein sequence, read N- to C-terminus: GMP reductase (349 aa).

Residue 108–131 (IDFLKIKKIFLLSSELKYICIDVA) participates in NADP(+) binding. Residues Gly181 and Gly183 each coordinate K(+). Cys186 acts as the Thioimidate intermediate in catalysis. 216–239 (IISDGGCTVSGDIAKAFGGGADFV) serves as a coordination point for NADP(+).

Belongs to the IMPDH/GMPR family. GuaC type 1 subfamily. In terms of assembly, homotetramer.

The enzyme catalyses IMP + NH4(+) + NADP(+) = GMP + NADPH + 2 H(+). Catalyzes the irreversible NADPH-dependent deamination of GMP to IMP. It functions in the conversion of nucleobase, nucleoside and nucleotide derivatives of G to A nucleotides, and in maintaining the intracellular balance of A and G nucleotides. The polypeptide is GMP reductase (Buchnera aphidicola subsp. Acyrthosiphon pisum (strain Tuc7)).